The following is a 485-amino-acid chain: UDP-N-acetylmuramate--L-alanine ligase (485 aa).

120 to 126 (GSHGKTT) is a binding site for ATP.

Belongs to the MurCDEF family.

The protein localises to the cytoplasm. It catalyses the reaction UDP-N-acetyl-alpha-D-muramate + L-alanine + ATP = UDP-N-acetyl-alpha-D-muramoyl-L-alanine + ADP + phosphate + H(+). It participates in cell wall biogenesis; peptidoglycan biosynthesis. In terms of biological role, cell wall formation. This Rickettsia africae (strain ESF-5) protein is UDP-N-acetylmuramate--L-alanine ligase.